The primary structure comprises 458 residues: MHDKTWSGRFNEPVSELVKQYTASIGFDRRLAEWDIQGSLAHAQMLKETGVLDEGDLADIRRGMAEILEEIRSGKIEWSSDLEDVHMNIERRLTDKIGDAGKRLHTGRSRNDQVATDIRLWLRDQITVIQSLIQSLQTALLDLAEQNAETVMPGFTHLQVAQPVSFGHHMLAYVEMLGRDNERMADCRRRVNRMPLGAAALAGTTYPIRREITAELLGFEQICQNSLDAVSDRDFAVEFTAAASLIMVHLSRLSEELILWMSPRFGFIDIADRFCTGSSIMPQKKNPDVPELVRGKSGRVIGHLIGLITLMKSQPLAYNKDNQEDKEPLFDTADTLIDTLRIYADMMRGVTVKPDNMRAAVMQGFATATDLADYLVKKGMPFRDAHEVVAQAVRHADEAGVDLSELPLEVLQGFSDLIADDVYGVLTPEGSLNARNHLGGSAPEQVRFQVKRWREMSA.

This sequence belongs to the lyase 1 family. Argininosuccinate lyase subfamily.

The protein resides in the cytoplasm. The catalysed reaction is 2-(N(omega)-L-arginino)succinate = fumarate + L-arginine. It functions in the pathway amino-acid biosynthesis; L-arginine biosynthesis; L-arginine from L-ornithine and carbamoyl phosphate: step 3/3. The sequence is that of Argininosuccinate lyase from Neisseria meningitidis serogroup A / serotype 4A (strain DSM 15465 / Z2491).